The following is a 360-amino-acid chain: DNA replication and repair protein RecF (360 aa).

30-37 (GQNGSGKT) is an ATP binding site.

It belongs to the RecF family.

The protein resides in the cytoplasm. Functionally, the RecF protein is involved in DNA metabolism; it is required for DNA replication and normal SOS inducibility. RecF binds preferentially to single-stranded, linear DNA. It also seems to bind ATP. The sequence is that of DNA replication and repair protein RecF from Shewanella sp. (strain W3-18-1).